Here is a 286-residue protein sequence, read N- to C-terminus: Shikimate dehydrogenase (NADP(+)) (286 aa).

Shikimate-binding positions include 19–21 (SLS) and threonine 66. Lysine 70 (proton acceptor) is an active-site residue. Shikimate is bound by residues asparagine 91 and aspartate 107. Residues 129–133 (GSGGA) and leucine 229 contribute to the NADP(+) site. Residue tyrosine 231 participates in shikimate binding. Glycine 252 provides a ligand contact to NADP(+).

This sequence belongs to the shikimate dehydrogenase family. As to quaternary structure, homodimer.

It catalyses the reaction shikimate + NADP(+) = 3-dehydroshikimate + NADPH + H(+). It functions in the pathway metabolic intermediate biosynthesis; chorismate biosynthesis; chorismate from D-erythrose 4-phosphate and phosphoenolpyruvate: step 4/7. Involved in the biosynthesis of the chorismate, which leads to the biosynthesis of aromatic amino acids. Catalyzes the reversible NADPH linked reduction of 3-dehydroshikimate (DHSA) to yield shikimate (SA). The sequence is that of Shikimate dehydrogenase (NADP(+)) from Prochlorococcus marinus (strain MIT 9215).